The following is a 35-amino-acid chain: Fatty acid synthase (35 aa).

S12 is an active-site residue.

Homodimer which is arranged in a head to tail fashion. Interacts with CEACAM1; this interaction is insulin and phosphorylation-dependent; reduces fatty-acid synthase activity.

The protein resides in the cytoplasm. It is found in the melanosome. It catalyses the reaction acetyl-CoA + n malonyl-CoA + 2n NADPH + 2n H(+) = a long-chain fatty acid + (n+1) CoA + n CO2 + 2n NADP(+).. Fatty acid synthetase catalyzes the formation of long-chain fatty acids from acetyl-CoA, malonyl-CoA and NADPH. This multifunctional protein has 7 catalytic activities as an acyl carrier protein. Functionally, this fragment is from the acyltransferase domain of the fatty acid synthetase. This chain is Fatty acid synthase (FASN), found in Capra hircus (Goat).